The sequence spans 656 residues: 1-deoxy-D-xylulose-5-phosphate synthase 1 (656 aa).

Residues His-73 and 113 to 115 (SHA) contribute to the thiamine diphosphate site. A Mg(2+)-binding site is contributed by Asp-144. Thiamine diphosphate is bound by residues 145 to 146 (GA), Asn-174, Tyr-285, and Glu-367. Asn-174 lines the Mg(2+) pocket. The disordered stretch occupies residues 625–656 (AGDRAGGPAVEQPGDGRMSGDGRIVMPAQGEN).

This sequence belongs to the transketolase family. DXPS subfamily. Homodimer. Mg(2+) is required as a cofactor. Requires thiamine diphosphate as cofactor.

The enzyme catalyses D-glyceraldehyde 3-phosphate + pyruvate + H(+) = 1-deoxy-D-xylulose 5-phosphate + CO2. It participates in metabolic intermediate biosynthesis; 1-deoxy-D-xylulose 5-phosphate biosynthesis; 1-deoxy-D-xylulose 5-phosphate from D-glyceraldehyde 3-phosphate and pyruvate: step 1/1. Its function is as follows. Catalyzes the acyloin condensation reaction between C atoms 2 and 3 of pyruvate and glyceraldehyde 3-phosphate to yield 1-deoxy-D-xylulose-5-phosphate (DXP). The chain is 1-deoxy-D-xylulose-5-phosphate synthase 1 from Streptomyces coelicolor (strain ATCC BAA-471 / A3(2) / M145).